Reading from the N-terminus, the 63-residue chain is Chymotrypsin/elastase isoinhibitor 1 (63 aa).

Cystine bridges form between Cys5–Cys38, Cys14–Cys33, Cys17–Cys29, Cys21–Cys60, and Cys40–Cys54. Residues 5 to 60 (CGPNEVWTECTGCEMKCGPDENTPCPLMCRRPSCECSPGRGMRRTNDGKCIPASQC) enclose the TIL domain.

It belongs to the serine protease inhibitor-like (TIL domain-containing) family.

The protein resides in the secreted. Defends the organism against the host's proteinases. The protein is Chymotrypsin/elastase isoinhibitor 1 of Ascaris suum (Pig roundworm).